The chain runs to 630 residues: tRNA uridine 5-carboxymethylaminomethyl modification enzyme MnmG (630 aa).

13 to 18 contributes to the FAD binding site; sequence GGGHAG. Position 273-287 (273-287) interacts with NAD(+); the sequence is GPRYCPSIEDKIHRF.

Belongs to the MnmG family. In terms of assembly, homodimer. Heterotetramer of two MnmE and two MnmG subunits. Requires FAD as cofactor.

It is found in the cytoplasm. In terms of biological role, NAD-binding protein involved in the addition of a carboxymethylaminomethyl (cmnm) group at the wobble position (U34) of certain tRNAs, forming tRNA-cmnm(5)s(2)U34. The sequence is that of tRNA uridine 5-carboxymethylaminomethyl modification enzyme MnmG from Pseudomonas putida (strain W619).